The sequence spans 269 residues: Putative pyruvate, phosphate dikinase regulatory protein (269 aa).

Residue 147–154 (GLSRTSKT) participates in ADP binding.

The protein belongs to the pyruvate, phosphate/water dikinase regulatory protein family. PDRP subfamily.

It carries out the reaction N(tele)-phospho-L-histidyl/L-threonyl-[pyruvate, phosphate dikinase] + ADP = N(tele)-phospho-L-histidyl/O-phospho-L-threonyl-[pyruvate, phosphate dikinase] + AMP + H(+). The catalysed reaction is N(tele)-phospho-L-histidyl/O-phospho-L-threonyl-[pyruvate, phosphate dikinase] + phosphate + H(+) = N(tele)-phospho-L-histidyl/L-threonyl-[pyruvate, phosphate dikinase] + diphosphate. In terms of biological role, bifunctional serine/threonine kinase and phosphorylase involved in the regulation of the pyruvate, phosphate dikinase (PPDK) by catalyzing its phosphorylation/dephosphorylation. The polypeptide is Putative pyruvate, phosphate dikinase regulatory protein (Clostridium botulinum (strain 657 / Type Ba4)).